The primary structure comprises 422 residues: L-threonine dehydratase biosynthetic IlvA (422 aa).

N6-(pyridoxal phosphate)lysine is present on lysine 60. Pyridoxal 5'-phosphate is bound by residues asparagine 87, 190–194, and serine 315; that span reads GGGGL. The 75-residue stretch at 339–413 folds into the ACT-like domain; it reads HYFIVNFPQR…KPFHYVEVNK (75 aa).

The protein belongs to the serine/threonine dehydratase family. As to quaternary structure, homotetramer. Pyridoxal 5'-phosphate serves as cofactor.

The enzyme catalyses L-threonine = 2-oxobutanoate + NH4(+). The protein operates within amino-acid biosynthesis; L-isoleucine biosynthesis; 2-oxobutanoate from L-threonine: step 1/1. Its function is as follows. Catalyzes the anaerobic formation of alpha-ketobutyrate and ammonia from threonine in a two-step reaction. The first step involved a dehydration of threonine and a production of enamine intermediates (aminocrotonate), which tautomerizes to its imine form (iminobutyrate). Both intermediates are unstable and short-lived. The second step is the nonenzymatic hydrolysis of the enamine/imine intermediates to form 2-ketobutyrate and free ammonia. In the low water environment of the cell, the second step is accelerated by RidA. The polypeptide is L-threonine dehydratase biosynthetic IlvA (ilvA) (Bacillus subtilis (strain 168)).